The sequence spans 245 residues: Thiopurine S-methyltransferase (245 aa).

29–40 (WQEKWVNHKTGF) is a binding site for S-adenosyl-L-methionine. Phe40 provides a ligand contact to substrate. Residue Lys58 is modified to N6-acetyllysine. Residues Leu69, Glu90, and Arg152 each coordinate S-adenosyl-L-methionine.

The protein belongs to the class I-like SAM-binding methyltransferase superfamily. TPMT family. As to quaternary structure, monomer.

The protein localises to the cytoplasm. The enzyme catalyses S-adenosyl-L-methionine + a thiopurine = S-adenosyl-L-homocysteine + a thiopurine S-methylether.. This is Thiopurine S-methyltransferase (TPMT) from Bos taurus (Bovine).